A 206-amino-acid chain; its full sequence is Thymidylate kinase (206 aa).

11–18 (GIDGAGKT) is a binding site for ATP.

The protein belongs to the thymidylate kinase family.

It carries out the reaction dTMP + ATP = dTDP + ADP. Phosphorylation of dTMP to form dTDP in both de novo and salvage pathways of dTTP synthesis. This chain is Thymidylate kinase, found in Burkholderia vietnamiensis (strain G4 / LMG 22486) (Burkholderia cepacia (strain R1808)).